The primary structure comprises 194 residues: ATP-dependent Clp protease proteolytic subunit (194 aa).

Serine 98 serves as the catalytic Nucleophile. Histidine 123 is a catalytic residue.

This sequence belongs to the peptidase S14 family. Fourteen ClpP subunits assemble into 2 heptameric rings which stack back to back to give a disk-like structure with a central cavity, resembling the structure of eukaryotic proteasomes.

Its subcellular location is the cytoplasm. The enzyme catalyses Hydrolysis of proteins to small peptides in the presence of ATP and magnesium. alpha-casein is the usual test substrate. In the absence of ATP, only oligopeptides shorter than five residues are hydrolyzed (such as succinyl-Leu-Tyr-|-NHMec, and Leu-Tyr-Leu-|-Tyr-Trp, in which cleavage of the -Tyr-|-Leu- and -Tyr-|-Trp bonds also occurs).. Cleaves peptides in various proteins in a process that requires ATP hydrolysis. Has a chymotrypsin-like activity. Plays a major role in the degradation of misfolded proteins. The protein is ATP-dependent Clp protease proteolytic subunit of Staphylococcus carnosus (strain TM300).